A 446-amino-acid chain; its full sequence is Branched-chain amino acid permease BrnQ (446 aa).

12 consecutive transmembrane segments (helical) span residues 13–33 (ISSMLFGLFFGAGNLIFPAYL), 41–61 (LWISLLGFLITGVGLPLLAIA), 81–101 (KYSYFFTCLLYLTIGPFFAIP), 120–140 (MAKSTGLFIFSLIFFAIMLFF), 154–174 (FLTPAFLLFFFFIMIMALLHP), 196–216 (VLAGYNTMDALAGLAFGIIVI), 237–257 (TGVLTCLLMAVIYAITALVGA), 285–305 (GAVIFALMIFVACLKTAIGLI), 325–345 (WAIIFSLLAFGIANVGLTTII), 347–367 (FSLPVLMLLYPLAISLILLAL), 381–401 (IMTAVTFLCALGDFFKALPAG), and 421–441 (GLGWLVPVTVIFAILAIKGVI).

This sequence belongs to the branched chain amino acid transporter family.

It is found in the cell membrane. Its activity is regulated as follows. Leucine uptake is inhibited by the proton ionophore carbonyl cyanide m-chlorophenylhydrazone (CCCP). Functionally, branched chain amino acid transport system which is involved in the uptake of leucine, valine and isoleucine. The proton motive force is probably the driving force for transport. In Lactobacillus delbrueckii subsp. lactis, this protein is Branched-chain amino acid permease BrnQ.